The chain runs to 324 residues: tRNA dimethylallyltransferase (324 aa).

20–27 contacts ATP; sequence GPTASGKS. Substrate is bound at residue 22–27; the sequence is TASGKS. Interaction with substrate tRNA stretches follow at residues 45–48, 168–172, and 284–291; these read DSAL, QRLIR, and KRQITWLR.

This sequence belongs to the IPP transferase family. In terms of assembly, monomer. Requires Mg(2+) as cofactor.

It carries out the reaction adenosine(37) in tRNA + dimethylallyl diphosphate = N(6)-dimethylallyladenosine(37) in tRNA + diphosphate. Catalyzes the transfer of a dimethylallyl group onto the adenine at position 37 in tRNAs that read codons beginning with uridine, leading to the formation of N6-(dimethylallyl)adenosine (i(6)A). The polypeptide is tRNA dimethylallyltransferase (Hydrogenovibrio crunogenus (strain DSM 25203 / XCL-2) (Thiomicrospira crunogena)).